The chain runs to 812 residues: Probable phosphoketolase (812 aa).

It belongs to the XFP family. Thiamine diphosphate serves as cofactor.

In Thermosynechococcus vestitus (strain NIES-2133 / IAM M-273 / BP-1), this protein is Probable phosphoketolase.